The primary structure comprises 243 residues: Cyclin-dependent kinase 20 (243 aa).

Residues 4-243 enclose the Protein kinase domain; the sequence is YCILGRIGEG…IHLSCRFLSV (240 aa). ATP is bound by residues 10 to 18 and Lys33; that span reads IGEGAHGIV. Asp127 acts as the Proton acceptor in catalysis.

Belongs to the protein kinase superfamily. CMGC Ser/Thr protein kinase family. CDC2/CDKX subfamily. Monomer. Interacts with TBC1D32 and MAK.

The protein localises to the nucleus. The protein resides in the cytoplasm. Its subcellular location is the cell projection. It is found in the cilium. The enzyme catalyses L-seryl-[protein] + ATP = O-phospho-L-seryl-[protein] + ADP + H(+). It carries out the reaction L-threonyl-[protein] + ATP = O-phospho-L-threonyl-[protein] + ADP + H(+). Required for high-level Shh responses in the developing neural tube. Together with TBC1D32, controls the structure of the primary cilium by coordinating assembly of the ciliary membrane and axoneme, allowing GLI2 to be properly activated in response to SHH signaling. Involved in cell growth. Activates CDK2, a kinase involved in the control of the cell cycle, by phosphorylating residue 'Thr-160'. This chain is Cyclin-dependent kinase 20 (CDK20), found in Macaca mulatta (Rhesus macaque).